The primary structure comprises 444 residues: UPF0761 membrane protein RC1_0578 (444 aa).

6 helical membrane passes run 49 to 69 (LLALVPLLTVTFAIFSAFPAY), 103 to 123 (AAALTGFGVIGLSLTSILLFF), 145 to 165 (LLSFWAVLTIMPLLLGASLSV), 186 to 206 (FMLPGLLEAAAFTLMFLMIPN), 219 to 239 (IAAALLMEVSKVGFGLYIAAF), and 248 to 268 (ALSVIPIFLFWLYTVWSVVLF). A disordered region spans residues 423 to 444 (SGQPSGQVETAVRQRTGLQGRI).

This sequence belongs to the UPF0761 family.

Its subcellular location is the cell inner membrane. The polypeptide is UPF0761 membrane protein RC1_0578 (Rhodospirillum centenum (strain ATCC 51521 / SW)).